A 213-amino-acid chain; its full sequence is ATP phosphoribosyltransferase (213 aa).

This sequence belongs to the ATP phosphoribosyltransferase family. Short subfamily. Heteromultimer composed of HisG and HisZ subunits.

It localises to the cytoplasm. The enzyme catalyses 1-(5-phospho-beta-D-ribosyl)-ATP + diphosphate = 5-phospho-alpha-D-ribose 1-diphosphate + ATP. It participates in amino-acid biosynthesis; L-histidine biosynthesis; L-histidine from 5-phospho-alpha-D-ribose 1-diphosphate: step 1/9. Functionally, catalyzes the condensation of ATP and 5-phosphoribose 1-diphosphate to form N'-(5'-phosphoribosyl)-ATP (PR-ATP). Has a crucial role in the pathway because the rate of histidine biosynthesis seems to be controlled primarily by regulation of HisG enzymatic activity. This Bacillus subtilis (strain 168) protein is ATP phosphoribosyltransferase (hisG).